The chain runs to 491 residues: Zinc finger and SCAN domain-containing protein 22 (491 aa).

S9 bears the Phosphoserine mark. Residues 49–131 (RLRFRHFRYE…VLVEDLTQVL (83 aa)) form the SCAN box domain. Disordered regions lie at residues 134-161 (RGWD…SNVT) and 204-249 (FKKT…DKFD). The span at 214–224 (VPTDQRGRESG) shows a compositional bias: basic and acidic residues. Polar residues predominate over residues 225-241 (ASRNSSSAWPNLTSQEK). C2H2-type zinc fingers lie at residues 268–290 (SKCR…QKTH), 296–318 (YACS…QVVH), 324–346 (HECK…QRIH), 352–374 (YKCG…QRVH), 380–402 (YECD…QRIH), 408–430 (YKCD…LRIH), 436–458 (YQCK…QRIH), and 464–486 (YKCS…LRIH). Residue K443 forms a Glycyl lysine isopeptide (Lys-Gly) (interchain with G-Cter in SUMO2) linkage.

Belongs to the krueppel C2H2-type zinc-finger protein family.

Its subcellular location is the nucleus. Functionally, may be involved in transcriptional regulation. In Homo sapiens (Human), this protein is Zinc finger and SCAN domain-containing protein 22 (ZSCAN22).